The sequence spans 612 residues: UvrABC system protein C (612 aa).

Positions Thr11–Ile90 constitute a GIY-YIG domain. The 36-residue stretch at Ser200 to Thr235 folds into the UVR domain.

It belongs to the UvrC family. As to quaternary structure, interacts with UvrB in an incision complex.

It localises to the cytoplasm. Functionally, the UvrABC repair system catalyzes the recognition and processing of DNA lesions. UvrC both incises the 5' and 3' sides of the lesion. The N-terminal half is responsible for the 3' incision and the C-terminal half is responsible for the 5' incision. This Syntrophotalea carbinolica (strain DSM 2380 / NBRC 103641 / GraBd1) (Pelobacter carbinolicus) protein is UvrABC system protein C.